Consider the following 365-residue polypeptide: Protein RecA (365 aa).

G69–T76 provides a ligand contact to ATP. The interval L344–E365 is disordered. Over residues N347 to E365 the composition is skewed to acidic residues.

Belongs to the RecA family.

It localises to the cytoplasm. In terms of biological role, can catalyze the hydrolysis of ATP in the presence of single-stranded DNA, the ATP-dependent uptake of single-stranded DNA by duplex DNA, and the ATP-dependent hybridization of homologous single-stranded DNAs. It interacts with LexA causing its activation and leading to its autocatalytic cleavage. The chain is Protein RecA from Arthrospira platensis (Spirulina platensis).